Consider the following 595-residue polypeptide: MSPFSETSVLLLPMVEKCINLLQTYGVSSITKLRQIHAFSIRHGVSISDAELGKHLIFYLVSLPSPPPMSYAHKVFSKIEKPINVFIWNTLIRGYAEIGNSISAFSLYREMRVSGLVEPDTHTYPFLIKAVTTMADVRLGETIHSVVIRSGFGSLIYVQNSLLHLYANCGDVASAYKVFDKMPEKDLVAWNSVINGFAENGKPEEALALYTEMNSKGIKPDGFTIVSLLSACAKIGALTLGKRVHVYMIKVGLTRNLHSSNVLLDLYARCGRVEEAKTLFDEMVDKNSVSWTSLIVGLAVNGFGKEAIELFKYMESTEGLLPCEITFVGILYACSHCGMVKEGFEYFRRMREEYKIEPRIEHFGCMVDLLARAGQVKKAYEYIKSMPMQPNVVIWRTLLGACTVHGDSDLAEFARIQILQLEPNHSGDYVLLSNMYASEQRWSDVQKIRKQMLRDGVKKVPGHSLVEVGNRVHEFLMGDKSHPQSDAIYAKLKEMTGRLRSEGYVPQISNVYVDVEEEEKENAVVYHSEKIAIAFMLISTPERSPITVVKNLRVCADCHLAIKLVSKVYNREIVVRDRSRFHHFKNGSCSCQDYW.

PPR repeat units follow at residues 84–118 (NVFI…GLVE), 120–154 (DTHT…GFGS), 155–185 (LIYV…MPEK), 186–220 (DLVA…GIKP), 221–255 (DGFT…GLTR), 256–290 (NLHS…NSVS), 291–317 (WTSL…MEST), 323–353 (CEIT…MREE), and 359–389 (RIEH…MPMQ). The segment at 394–469 (IWRTLLGACT…VPGHSLVEVG (76 aa)) is type E motif. The interval 470–500 (NRVHEFLMGDKSHPQSDAIYAKLKEMTGRLR) is type E(+) motif. The interval 501–595 (SEGYVPQISN…NGSCSCQDYW (95 aa)) is type DYW motif.

It belongs to the PPR family. PCMP-H subfamily.

This Arabidopsis thaliana (Mouse-ear cress) protein is Pentatricopeptide repeat-containing protein At4g21065 (PCMP-H28).